Here is a 79-residue protein sequence, read N- to C-terminus: Sec-independent protein translocase protein TatA (79 aa).

The chain crosses the membrane as a helical span at residues 1–21 (MGFSTTHLLIFLVIIIVIFGT). A disordered region spans residues 43–63 (KEGSDKAADAPAAAPQQVASS). Residues 51–63 (DAPAAAPQQVASS) are compositionally biased toward low complexity.

It belongs to the TatA/E family. In terms of assembly, the Tat system comprises two distinct complexes: a TatABC complex, containing multiple copies of TatA, TatB and TatC subunits, and a separate TatA complex, containing only TatA subunits. Substrates initially bind to the TatABC complex, which probably triggers association of the separate TatA complex to form the active translocon.

The protein localises to the cell inner membrane. Its function is as follows. Part of the twin-arginine translocation (Tat) system that transports large folded proteins containing a characteristic twin-arginine motif in their signal peptide across membranes. TatA could form the protein-conducting channel of the Tat system. This chain is Sec-independent protein translocase protein TatA, found in Albidiferax ferrireducens (strain ATCC BAA-621 / DSM 15236 / T118) (Rhodoferax ferrireducens).